The sequence spans 448 residues: uncharacterized protein (448 aa).

The helical transmembrane segment at 19–41 (LGLLVPFLLLLFSCTNTVGYGVL) threads the bilayer. Positions 105 to 181 (YSYATSVLDG…CFSHGLSLFD (77 aa)) constitute an SH3b domain.

The protein resides in the membrane. This is an uncharacterized protein from Treponema pallidum (strain Nichols).